We begin with the raw amino-acid sequence, 150 residues long: MTKRFQHSRRDLRERAFQALFTMEMGGDFLLASQFAYDYDKEVADDKQPSELPVFLLNLVNGVMDHKAELDEVIKKNLKAGWSIERLTVVDKTMLRLGLFEMTLFEETPDRVALNEIIEIAKKYSDDTSAKFINGLLSQFVSDESAAVTD.

This sequence belongs to the NusB family.

Involved in transcription antitermination. Required for transcription of ribosomal RNA (rRNA) genes. Binds specifically to the boxA antiterminator sequence of the ribosomal RNA (rrn) operons. The sequence is that of Transcription antitermination protein NusB from Streptococcus equi subsp. zooepidemicus (strain H70).